The primary structure comprises 361 residues: Chorismate synthase (361 aa).

NADP(+) contacts are provided by R48 and R54. FMN contacts are provided by residues 131-133, 243-244, G287, 302-306, and R328; these read RSS, NA, and KPTSS.

The protein belongs to the chorismate synthase family. As to quaternary structure, homotetramer. FMNH2 serves as cofactor.

It carries out the reaction 5-O-(1-carboxyvinyl)-3-phosphoshikimate = chorismate + phosphate. It functions in the pathway metabolic intermediate biosynthesis; chorismate biosynthesis; chorismate from D-erythrose 4-phosphate and phosphoenolpyruvate: step 7/7. Its function is as follows. Catalyzes the anti-1,4-elimination of the C-3 phosphate and the C-6 proR hydrogen from 5-enolpyruvylshikimate-3-phosphate (EPSP) to yield chorismate, which is the branch point compound that serves as the starting substrate for the three terminal pathways of aromatic amino acid biosynthesis. This reaction introduces a second double bond into the aromatic ring system. The polypeptide is Chorismate synthase (Rhodopseudomonas palustris (strain BisA53)).